Here is a 142-residue protein sequence, read N- to C-terminus: DNA-directed RNA polymerase II subunit RPB4 (142 aa).

This sequence belongs to the eukaryotic RPB4 RNA polymerase subunit family. As to quaternary structure, component of the RNA polymerase II (Pol II) core complex consisting of 12 subunits: a ten-subunit catalytic core composed of POLR2A/RPB1, POLR2B/RPB2, POLR2C/RPB3, POLR2I/RPB9, POLR2J/RPB11, POLR2E/RPABC1, POLR2F/RPABC2, POLR2H/RPABC3, POLR2K/RPABC4 and POLR2L/RPABC5 and a mobile stalk composed of two subunits POLR2D/RPB4 and POLR2G/RPB7, protruding from the core and functioning primarily in transcription initiation. Part of Pol II(G) complex, in which Pol II core associates with an additional subunit POLR2M; unlike conventional Pol II, Pol II(G) functions as a transcriptional repressor. Part of Pol II pre-initiation complex (PIC), in which Pol II core assembles with Mediator, general transcription factors and other specific initiation factors including GTF2E1, GTF2E2, GTF2F1, GTF2F2, TCEA1, ERCC2, ERCC3, GTF2H2, GTF2H3, GTF2H4, GTF2H5, GTF2A1, GTF2A2, GTF2B and TBP; this large multi-subunit PIC complex mediates DNA unwinding and targets Pol II core to the transcription start site where the first phosphodiester bond forms.

It localises to the nucleus. Functionally, core component of RNA polymerase II (Pol II), a DNA-dependent RNA polymerase which synthesizes mRNA precursors and many functional non-coding RNAs using the four ribonucleoside triphosphates as substrates. Pol II is the central component of the basal RNA polymerase II transcription machinery. It is composed of mobile elements that move relative to each other. POLR2D/RPB4 is part of a subcomplex with POLR2G/RPB7 that binds to a pocket formed by POLR2A/RPB1, POLR2B/RPB2 and POLR2F/RPABC2 at the base of the clamp element. The POLR2D/RPB4-POLR2G/RPB7 subcomplex seems to lock the clamp via POLR2G/RPB7 in the closed conformation thus preventing double-stranded DNA to enter the active site cleft. The POLR2D/RPB4-POLR2G/RPB7 subcomplex binds single-stranded DNA and RNA. This chain is DNA-directed RNA polymerase II subunit RPB4 (POLR2D), found in Bos taurus (Bovine).